Here is a 931-residue protein sequence, read N- to C-terminus: Chitin synthase III (931 aa).

N-linked (GlcNAc...) asparagine glycosylation is found at Asn37 and Asn94. The tract at residues 93–154 is disordered; sequence PNASQLPPAG…PGGVGQAGGL (62 aa). Residues 102–122 show a composition bias toward gly residues; sequence GSGGFGDNGFGQYGQPQGFGG. A glycan (N-linked (GlcNAc...) asparagine) is linked at Asn558. 5 helical membrane passes run 585–605, 644–664, 677–697, 731–751, and 759–779; these read FFLHIQVIYNVLNVIFSWFSL, IINALLKYLYLAFVILQFILA, IASFMVFGLIQGYILVLSGYL, VILIALITIYGLYFVASFLYL, and SFPYYMLLMSTYINILMVYAF. Residue Asn802 is glycosylated (N-linked (GlcNAc...) asparagine). 2 consecutive transmembrane segments (helical) span residues 858-878 and 899-919; these read TGLVVSWLFSNILLVVIITSD and FLLYATAALSIVRFIGFLWFL.

Belongs to the chitin synthase family. Class III subfamily. Highly expressed in conidia and during appressorium formation.

Its subcellular location is the cell membrane. It carries out the reaction [(1-&gt;4)-N-acetyl-beta-D-glucosaminyl](n) + UDP-N-acetyl-alpha-D-glucosamine = [(1-&gt;4)-N-acetyl-beta-D-glucosaminyl](n+1) + UDP + H(+). Functionally, polymerizes chitin, a structural polymer of the cell wall and septum, by transferring the sugar moiety of UDP-GlcNAc to the non-reducing end of the growing chitin polymer. Contributes to the production of conidia and the ability of fungal conidia to germinate. Involved in the fungal cell wall integrity and the ability of conidia to withstand biophysical pressure. Required for appressorium formation and evasion of insect cellular and/or humoral defenses, promoting the fungal dimorphic transition to the production of hyphal bodies that occurs within hosts, and ultimately to virulence. The protein is Chitin synthase III of Metarhizium acridum (strain CQMa 102).